A 684-amino-acid chain; its full sequence is Threonine--tRNA ligase (684 aa).

Positions 1 to 66 (MSTAASPAPA…DADVEVVPVP (66 aa)) constitute a TGS domain. A catalytic region spans residues 261-567 (DHRKLGVELD…LTEHYAGAFP (307 aa)). Zn(2+)-binding residues include Cys-366, His-417, and His-544.

It belongs to the class-II aminoacyl-tRNA synthetase family. Homodimer. It depends on Zn(2+) as a cofactor.

Its subcellular location is the cytoplasm. The catalysed reaction is tRNA(Thr) + L-threonine + ATP = L-threonyl-tRNA(Thr) + AMP + diphosphate + H(+). In terms of biological role, catalyzes the attachment of threonine to tRNA(Thr) in a two-step reaction: L-threonine is first activated by ATP to form Thr-AMP and then transferred to the acceptor end of tRNA(Thr). Also edits incorrectly charged L-seryl-tRNA(Thr). The protein is Threonine--tRNA ligase of Mycobacterium sp. (strain KMS).